A 132-amino-acid polypeptide reads, in one-letter code: Protein LH2 (132 aa).

The polypeptide is Protein LH2 (Pantherophis guttatus (Corn snake)).